Consider the following 214-residue polypeptide: DELTA-actitoxin-Aeq1a (214 aa).

The N-terminal stretch at 1–19 is a signal peptide; it reads MSRLIIVFIVVTMICSATA. Positions 20–35 are excised as a propeptide; the sequence is LPSKKIIDEDEEDEKR. Residues 38-47 form a plays an important role in the hemolytic activity region; it reads DVAGAVIDGA. Positions 46–65 are N-terminal region; it reads GASLSFDILKTVLEALGNVK. Residues Ser-89, Val-122, Ser-140, Pro-142, Tyr-168, Tyr-172, and Tyr-173 each contribute to the phosphocholine site. A trp-rich region, which is important for the binding to lipid membrane region spans residues 140–155; that stretch reads SVPYDYNWYSNWWNVR. The short motif at 179–181 is the Cell attachment site, crucial for protein stability element; sequence RGD.

The protein belongs to the actinoporin family. Sea anemone subfamily. As to quaternary structure, octamer or nonamer in membranes. Monomer in the soluble state.

The protein localises to the secreted. It is found in the nematocyst. It localises to the target cell membrane. Its function is as follows. Pore-forming protein that forms cations-selective hydrophilic pores of around 1 nm and causes cardiac stimulation and cytolysis. Pore formation is a multi-step process that involves specific recognition of membrane sphingomyelin (but neither cholesterol nor phosphatidylcholine) using aromatic rich region and adjacent phosphocholine (POC) binding site, firm binding to the membrane (mainly driven by hydrophobic interactions) accompanied by the transfer of the N-terminal region to the lipid-water interface and finally pore formation after oligomerization of monomers. Cytolytic effects include red blood cells hemolysis, platelet aggregation and lysis, cytotoxic and cytostatic effects on fibroblasts. Lethality in mammals has been ascribed to severe vasospasm of coronary vessels, cardiac arrhythmia, and inotropic effects. This chain is DELTA-actitoxin-Aeq1a, found in Actinia equina (Beadlet anemone).